We begin with the raw amino-acid sequence, 467 residues long: Sialic acid-binding Ig-like lectin 7 (467 aa).

An N-terminal signal peptide occupies residues 1–18 (MLLLLLLPLLWGRERVEG). Residues 19–353 (QKSNRKDYSL…KMRPVSGVLL (335 aa)) lie on the Extracellular side of the membrane. The region spanning 39-122 (GMCVHVRCSF…ARMSDAGRYF (84 aa)) is the Ig-like V-type domain. Cys-46 and Cys-106 are oxidised to a cystine. Asn-105 carries N-linked (GlcNAc...) asparagine glycosylation. N-acetylneuraminate-binding positions include Arg-124 and 131-135 (KWNYK). 2 N-linked (GlcNAc...) asparagine glycosylation sites follow: Asn-142 and Asn-165. An Ig-like C2-type 1 domain is found at 150–233 (PNILIPGTLE…AGVTTNRTIQ (84 aa)). Residues Cys-168 and Cys-217 are joined by a disulfide bond. Residues Asn-229, Asn-235, Asn-242, and Asn-260 are each glycosylated (N-linked (GlcNAc...) asparagine). The 97-residue stretch at 240–336 (PQNLTVTVFQ…GSQHVSLNLS (97 aa)) folds into the Ig-like C2-type 2 domain. A disulfide bridge links Cys-276 with Cys-320. Asn-334 carries an N-linked (GlcNAc...) asparagine glycan. A helical membrane pass occupies residues 354–376 (GAVGGAGATALVFLSFCVIFIVV). Residues 377-467 (RSCRKKSARP…NEYSEIKIPK (91 aa)) lie on the Cytoplasmic side of the membrane. Residues 401–412 (IRGSASQGNLTE) show a composition bias toward polar residues. The segment at 401–431 (IRGSASQGNLTESWADDNPRHHGLAAHSSGE) is disordered. At Ser-429 the chain carries Phosphoserine. The short motif at 435–440 (IQYAPL) is the ITIM motif element. The disordered stretch occupies residues 443–467 (HKGEPQDLSGQEATNNEYSEIKIPK). A compositionally biased stretch (polar residues) spans 450–460 (LSGQEATNNEY).

The protein belongs to the immunoglobulin superfamily. SIGLEC (sialic acid binding Ig-like lectin) family. Interacts with PTPN6/SHP-1 upon phosphorylation. In terms of processing, tyrosine phosphorylated. As to expression, predominantly expressed by resting and activated natural killer cells and at lower levels by granulocytes and monocytes. High expression found in placenta, liver, lung, spleen, and peripheral blood leukocytes.

Its subcellular location is the membrane. In terms of biological role, putative adhesion molecule that mediates sialic-acid dependent binding to cells. Preferentially binds to alpha-2,3- and alpha-2,6-linked sialic acid. Also binds disialogangliosides (disialogalactosyl globoside, disialyl lactotetraosylceramide and disialyl GalNAc lactotetraoslylceramide). The sialic acid recognition site may be masked by cis interactions with sialic acids on the same cell surface. In the immune response, may act as an inhibitory receptor upon ligand induced tyrosine phosphorylation by recruiting cytoplasmic phosphatase(s) via their SH2 domain(s) that block signal transduction through dephosphorylation of signaling molecules. Mediates inhibition of natural killer cells cytotoxicity. May play a role in hemopoiesis. Inhibits differentiation of CD34+ cell precursors towards myelomonocytic cell lineage and proliferation of leukemic myeloid cells (in vitro). The polypeptide is Sialic acid-binding Ig-like lectin 7 (SIGLEC7) (Homo sapiens (Human)).